We begin with the raw amino-acid sequence, 317 residues long: Protease 7 (317 aa).

The first 20 residues, 1–20, serve as a signal peptide directing secretion; sequence MRAKLLGIVLTTPIAISSFA. Topologically, residues 21–31 are periplasmic; the sequence is STETLSFTPDN. A beta stranded transmembrane segment spans residues 32 to 41; it reads INADISLGTL. Topologically, residues 42–69 are extracellular; sequence SGKTKERVYLAEEGGRKVSQLDWKFNNA. A beta stranded membrane pass occupies residues 70 to 78; that stretch reads AIIKGAINW. Residues 79-83 are Periplasmic-facing; it reads DLMPQ. Residues 84 to 92 traverse the membrane as a beta stranded segment; it reads ISIGAAGWT. The Extracellular segment spans residues 93–130; it reads TLGSRGGNMVDQDWMDSSNPGTWTDESRHPDTQLNYAN. Catalysis depends on residues Asp103 and Asp105. Residues 131–140 form a beta stranded membrane-spanning segment; it reads EFDLNIKGWL. The Periplasmic segment spans residues 141-145; it reads LNEPN. A beta stranded membrane pass occupies residues 146 to 156; it reads YRLGLMAGYQE. The Extracellular portion of the chain corresponds to 157–197; it reads SRYSFTARGGSYIYSSEEGFRDDIGSFPNGERAIGYKQRFK. The chain crosses the membrane as a beta stranded span at residues 198–209; sequence MPYIGLTGSYRY. Residues 210–211 are Periplasmic-facing; it reads ED. Residues 212 to 221 traverse the membrane as a beta stranded segment; that stretch reads FELGGTFKYS. Topologically, residues 222-250 are extracellular; the sequence is GWVEASDNDEHYDPGKRITYRSKVKDQNY. Residues Asp230 and His232 contribute to the active site. Residues 251–261 form a beta stranded membrane-spanning segment; it reads YSVSVNAGYYV. The Periplasmic portion of the chain corresponds to 262–264; it reads TPN. Residues 265 to 274 form a beta stranded membrane-spanning segment; the sequence is AKVYVEGTWN. At 275–306 the chain is on the extracellular side; that stretch reads RVTNKKGNTSLYDHNDNTSDYSKNGAGIENYN. A beta stranded membrane pass occupies residues 307–316; sequence FITTAGLKYT. Position 317 (Phe317) is a topological domain, periplasmic.

This sequence belongs to the peptidase A26 family. Homopentamer.

It localises to the cell outer membrane. The catalysed reaction is Has a virtual requirement for Arg in the P1 position and a slightly less stringent preference for this residue in the P1' position, which can also contain Lys, Gly or Val.. With respect to regulation, inhibited by zinc. Protease that can cleave T7 RNA polymerase, ferric enterobactin receptor protein (FEP), antimicrobial peptide protamine and other proteins. This protease has a specificity for paired basic residues. The chain is Protease 7 (ompT) from Escherichia coli O157:H7.